The following is a 471-amino-acid chain: Cysteine--tRNA ligase (471 aa).

C29 is a binding site for Zn(2+). The short motif at 31-41 (LTVQSEPHVGH) is the 'HIGH' region element. Zn(2+)-binding residues include C215, H240, and E244. The short motif at 271 to 275 (KMSKS) is the 'KMSKS' region element. K274 is an ATP binding site.

It belongs to the class-I aminoacyl-tRNA synthetase family. As to quaternary structure, monomer. Zn(2+) is required as a cofactor.

The protein localises to the cytoplasm. The enzyme catalyses tRNA(Cys) + L-cysteine + ATP = L-cysteinyl-tRNA(Cys) + AMP + diphosphate. This is Cysteine--tRNA ligase from Nocardioides sp. (strain ATCC BAA-499 / JS614).